Consider the following 395-residue polypeptide: Probable L-tyrosine/L-aspartate decarboxylase (395 aa).

The residue at position 242 (lysine 242) is an N6-(pyridoxal phosphate)lysine.

It belongs to the group II decarboxylase family. MfnA subfamily. Pyridoxal 5'-phosphate serves as cofactor.

The enzyme catalyses L-tyrosine + H(+) = tyramine + CO2. The catalysed reaction is L-aspartate + H(+) = beta-alanine + CO2. The protein operates within cofactor biosynthesis; methanofuran biosynthesis. It participates in cofactor biosynthesis; coenzyme A biosynthesis. Functionally, catalyzes the decarboxylation of L-tyrosine to produce tyramine for methanofuran biosynthesis. Can also catalyze the decarboxylation of L-aspartate to produce beta-alanine for coenzyme A (CoA) biosynthesis. This Methanosarcina barkeri (strain Fusaro / DSM 804) protein is Probable L-tyrosine/L-aspartate decarboxylase.